Here is a 316-residue protein sequence, read N- to C-terminus: Olfactory receptor 8J1 (316 aa).

The Extracellular portion of the chain corresponds to 1 to 25 (MAPENFTRVTEFILTGVSSCPELQI). N-linked (GlcNAc...) asparagine glycosylation is present at Asn-5. Residues 26-46 (PLFLVFLVLYGLTMAGNLGII) traverse the membrane as a helical segment. Topologically, residues 47–54 (TLTSVDSR) are cytoplasmic. The chain crosses the membrane as a helical span at residues 55–75 (LQTPMYFFLQHLALINLGNST). Residues 76-99 (VIAPKMLINFLVKKKTTSFYECAT) are Extracellular-facing. A disulfide bridge links Cys-97 with Cys-189. The chain crosses the membrane as a helical span at residues 100-120 (QLGGFLFFIVSEVIMLALMAY). The Cytoplasmic segment spans residues 121–139 (DRYVAICNPLLYMVVVSRR). A helical transmembrane segment spans residues 140 to 160 (LCLLLVSLTYLYGFSTAIVVS). The Extracellular segment spans residues 161–197 (SYVFSVSYCSSNIINHFYCDNVPLLALSCSDTYLPET). A helical membrane pass occupies residues 198-217 (VVFISAATNVVGSLIIVLVS). At 218-237 (YFNIVLSILKICSSEGRKKA) the chain is on the cytoplasmic side. Residues 238 to 258 (FSTCASHMMAVTIFYGTLLFM) form a helical membrane-spanning segment. Residues 259–272 (YVQPRSNHSLDTDD) lie on the Extracellular side of the membrane. A helical transmembrane segment spans residues 273 to 293 (KMASVFYTLVIPMLNPLIYSL). Topologically, residues 294–316 (RNKDVKTALQRFMTNLCYSFKTM) are cytoplasmic.

The protein belongs to the G-protein coupled receptor 1 family.

It is found in the cell membrane. Its function is as follows. Odorant receptor. The polypeptide is Olfactory receptor 8J1 (OR8J1) (Homo sapiens (Human)).